The primary structure comprises 185 residues: Elongation factor P (185 aa).

The protein belongs to the elongation factor P family.

The protein localises to the cytoplasm. It functions in the pathway protein biosynthesis; polypeptide chain elongation. In terms of biological role, involved in peptide bond synthesis. Stimulates efficient translation and peptide-bond synthesis on native or reconstituted 70S ribosomes in vitro. Probably functions indirectly by altering the affinity of the ribosome for aminoacyl-tRNA, thus increasing their reactivity as acceptors for peptidyl transferase. This chain is Elongation factor P, found in Clostridium botulinum (strain Alaska E43 / Type E3).